We begin with the raw amino-acid sequence, 447 residues long: Ribosomal protein uS12 methylthiotransferase RimO (447 aa).

Residues 15–125 (PRVGFVSLGC…VMQAIHRHLP (111 aa)) form the MTTase N-terminal domain. [4Fe-4S] cluster-binding residues include C24, C60, C89, C156, C160, and C163. The region spanning 142-379 (LTPKHYAYLK…MQWQEEISKK (238 aa)) is the Radical SAM core domain. The region spanning 379-447 (KRLAGKKGRI…GIHDLWAKKI (69 aa)) is the TRAM domain.

Belongs to the methylthiotransferase family. RimO subfamily. It depends on [4Fe-4S] cluster as a cofactor.

It localises to the cytoplasm. The enzyme catalyses L-aspartate(89)-[ribosomal protein uS12]-hydrogen + (sulfur carrier)-SH + AH2 + 2 S-adenosyl-L-methionine = 3-methylsulfanyl-L-aspartate(89)-[ribosomal protein uS12]-hydrogen + (sulfur carrier)-H + 5'-deoxyadenosine + L-methionine + A + S-adenosyl-L-homocysteine + 2 H(+). In terms of biological role, catalyzes the methylthiolation of an aspartic acid residue of ribosomal protein uS12. The sequence is that of Ribosomal protein uS12 methylthiotransferase RimO from Nitrosomonas europaea (strain ATCC 19718 / CIP 103999 / KCTC 2705 / NBRC 14298).